A 338-amino-acid chain; its full sequence is Holliday junction branch migration complex subunit RuvB (338 aa).

The segment at 1-181 is large ATPase domain (RuvB-L); it reads MTTRTISPEK…FGVISRLEFY (181 aa). ATP-binding positions include Leu20, Arg21, Gly62, Lys65, Thr66, Thr67, 128–130, Arg171, Tyr181, and Arg218; that span reads EDF. Residue Thr66 coordinates Mg(2+). Residues 182-252 are small ATPAse domain (RuvB-S); that stretch reads TDAELSTIVT…VVDESLKLLE (71 aa). The tract at residues 255 to 338 is head domain (RuvB-H); sequence EKGFDQMDRT…APAPGQGALF (84 aa). Residues Arg291, Arg310, and Arg315 each coordinate DNA.

Belongs to the RuvB family. In terms of assembly, homohexamer. Forms an RuvA(8)-RuvB(12)-Holliday junction (HJ) complex. HJ DNA is sandwiched between 2 RuvA tetramers; dsDNA enters through RuvA and exits via RuvB. An RuvB hexamer assembles on each DNA strand where it exits the tetramer. Each RuvB hexamer is contacted by two RuvA subunits (via domain III) on 2 adjacent RuvB subunits; this complex drives branch migration. In the full resolvosome a probable DNA-RuvA(4)-RuvB(12)-RuvC(2) complex forms which resolves the HJ.

The protein resides in the cytoplasm. The enzyme catalyses ATP + H2O = ADP + phosphate + H(+). In terms of biological role, the RuvA-RuvB-RuvC complex processes Holliday junction (HJ) DNA during genetic recombination and DNA repair, while the RuvA-RuvB complex plays an important role in the rescue of blocked DNA replication forks via replication fork reversal (RFR). RuvA specifically binds to HJ cruciform DNA, conferring on it an open structure. The RuvB hexamer acts as an ATP-dependent pump, pulling dsDNA into and through the RuvAB complex. RuvB forms 2 homohexamers on either side of HJ DNA bound by 1 or 2 RuvA tetramers; 4 subunits per hexamer contact DNA at a time. Coordinated motions by a converter formed by DNA-disengaged RuvB subunits stimulates ATP hydrolysis and nucleotide exchange. Immobilization of the converter enables RuvB to convert the ATP-contained energy into a lever motion, pulling 2 nucleotides of DNA out of the RuvA tetramer per ATP hydrolyzed, thus driving DNA branch migration. The RuvB motors rotate together with the DNA substrate, which together with the progressing nucleotide cycle form the mechanistic basis for DNA recombination by continuous HJ branch migration. Branch migration allows RuvC to scan DNA until it finds its consensus sequence, where it cleaves and resolves cruciform DNA. In Geobacter sulfurreducens (strain ATCC 51573 / DSM 12127 / PCA), this protein is Holliday junction branch migration complex subunit RuvB.